A 30-amino-acid chain; its full sequence is ATP-dependent Clp protease ATP-binding subunit ClpA homolog (30 aa).

It belongs to the ClpA/ClpB family.

The protein localises to the plastid. It is found in the chloroplast. In terms of biological role, may interact with a ClpP-like protease involved in degradation of denatured proteins in the chloroplast. The sequence is that of ATP-dependent Clp protease ATP-binding subunit ClpA homolog from Pinus pinaster (Maritime pine).